Reading from the N-terminus, the 199-residue chain is Photosystem I reaction center subunit XI (199 aa).

2 helical membrane-spanning segments follow: residues 108-128 (ITAGLLAAIGAVHIMTALLVL) and 165-185 (FWLGGCGGAVFAWLLVGTLHL).

This sequence belongs to the PsaL family.

It is found in the cellular thylakoid membrane. The protein is Photosystem I reaction center subunit XI of Prochlorococcus marinus (strain MIT 9515).